A 353-amino-acid chain; its full sequence is UPF0283 membrane protein YpsIP31758_1791 (353 aa).

3 helical membrane-spanning segments follow: residues 71–91 (MVTAGMVILGASVIAQSVQWV), 101–121 (IALGATTAGGLIILAGVGSVV), and 214–234 (ESALMIAVSPLALVDMAFIAW).

The protein belongs to the UPF0283 family.

The protein localises to the cell inner membrane. The chain is UPF0283 membrane protein YpsIP31758_1791 from Yersinia pseudotuberculosis serotype O:1b (strain IP 31758).